Consider the following 394-residue polypeptide: 1-deoxy-D-xylulose 5-phosphate reductoisomerase (394 aa).

6 residues coordinate NADPH: T10, G11, S12, I13, N38, and N125. K126 contributes to the 1-deoxy-D-xylulose 5-phosphate binding site. E127 serves as a coordination point for NADPH. D151 provides a ligand contact to Mn(2+). 1-deoxy-D-xylulose 5-phosphate-binding residues include S152, E153, S182, and H205. E153 lines the Mn(2+) pocket. Residue G211 coordinates NADPH. 4 residues coordinate 1-deoxy-D-xylulose 5-phosphate: S218, N223, K224, and E227. E227 serves as a coordination point for Mn(2+).

It belongs to the DXR family. The cofactor is Mg(2+). Requires Mn(2+) as cofactor.

The catalysed reaction is 2-C-methyl-D-erythritol 4-phosphate + NADP(+) = 1-deoxy-D-xylulose 5-phosphate + NADPH + H(+). It participates in isoprenoid biosynthesis; isopentenyl diphosphate biosynthesis via DXP pathway; isopentenyl diphosphate from 1-deoxy-D-xylulose 5-phosphate: step 1/6. In terms of biological role, catalyzes the NADPH-dependent rearrangement and reduction of 1-deoxy-D-xylulose-5-phosphate (DXP) to 2-C-methyl-D-erythritol 4-phosphate (MEP). The polypeptide is 1-deoxy-D-xylulose 5-phosphate reductoisomerase (Methylococcus capsulatus (strain ATCC 33009 / NCIMB 11132 / Bath)).